We begin with the raw amino-acid sequence, 64 residues long: Large ribosomal subunit protein bL35 (64 aa).

A compositionally biased stretch (basic residues) spans Met-1–Arg-26. 2 disordered regions span residues Met-1 to Tyr-28 and Phe-33 to Ser-52.

It belongs to the bacterial ribosomal protein bL35 family.

This is Large ribosomal subunit protein bL35 from Exiguobacterium sibiricum (strain DSM 17290 / CCUG 55495 / CIP 109462 / JCM 13490 / 255-15).